The chain runs to 316 residues: Altered inheritance of mitochondria protein 18, mitochondrial (316 aa).

The transit peptide at 1 to 41 (MFGRVFNRSSPIIRLSVRTITSLNGARASVNRPLAKTLISN) directs the protein to the mitochondrion.

This sequence belongs to the AIM18/AIM46 family.

It localises to the mitochondrion. The polypeptide is Altered inheritance of mitochondria protein 18, mitochondrial (AIM18) (Vanderwaltozyma polyspora (strain ATCC 22028 / DSM 70294 / BCRC 21397 / CBS 2163 / NBRC 10782 / NRRL Y-8283 / UCD 57-17) (Kluyveromyces polysporus)).